The following is a 155-amino-acid chain: UPF0178 protein TDE_2151 (155 aa).

The protein belongs to the UPF0178 family.

This chain is UPF0178 protein TDE_2151, found in Treponema denticola (strain ATCC 35405 / DSM 14222 / CIP 103919 / JCM 8153 / KCTC 15104).